We begin with the raw amino-acid sequence, 222 residues long: MVKYLVAQGVNVDAQNSRALCLACKYGYINIAYFLMHEGANIYANDNHPIRLAAEYGHLSIVKLLIYHNANIRAVEDSALRMAAKRNKLEVVKYIIEKIGTNYEYSDYPLAYAAGKGHIEMIEYLLSIGEKITDYAMFMAINNGHVGTVKYLIDESQSLPCISYSELAKITRKGHLEMIKLLNNRGIKINKIVNTTIINETIEKERWEILEYFNKIGVNNNC.

7 ANK repeats span residues 1–14 (MVKYLVAQGVNVDA), 15–44 (QNSRALCLACKYGYINIAYFLMHEGANIYA), 45–74 (NDNHPIRLAAEYGHLSIVKLLIYHNANIRA), 76–104 (EDSALRMAAKRNKLEVVKYIIEKIGTNYE), 105–134 (YSDYPLAYAAGKGHIEMIEYLLSIGEKITD), 136–161 (AMFMAINNGHVGTVKYLIDESQSLPC), and 163–191 (SYSELAKITRKGHLEMIKLLNNRGIKINK).

This is Putative ankyrin repeat protein L36 from Acanthamoeba polyphaga (Amoeba).